A 391-amino-acid polypeptide reads, in one-letter code: Probable protein phosphatase 2C 32 (391 aa).

The tract at residues 1-53 (MSCTVAIPSSPVFSPSRRPLSCKAASASASPESVSVAASSPAQAAPPAGSPLR) is disordered. The segment covering 8-51 (PSSPVFSPSRRPLSCKAASASASPESVSVAASSPAQAAPPAGSP) has biased composition (low complexity). A helical membrane pass occupies residues 95–115 (LVVPVCGGAAAAAAAAAVAAV). Residues 129–386 (EFAVYCRRGK…DDISIVIIQL (258 aa)) enclose the PPM-type phosphatase domain. 4 residues coordinate Mn(2+): Asp168, Gly169, Asp332, and Asp377.

The protein belongs to the PP2C family. Requires Mg(2+) as cofactor. Mn(2+) serves as cofactor.

Its subcellular location is the membrane. It carries out the reaction O-phospho-L-seryl-[protein] + H2O = L-seryl-[protein] + phosphate. It catalyses the reaction O-phospho-L-threonyl-[protein] + H2O = L-threonyl-[protein] + phosphate. The sequence is that of Probable protein phosphatase 2C 32 from Oryza sativa subsp. japonica (Rice).